Consider the following 116-residue polypeptide: Non-specific lipid-transfer protein (116 aa).

A signal peptide spans 1-23 (MASMKVVCVALIMCIVIAPMAES). Cystine bridges form between Cys-27–Cys-74, Cys-37–Cys-51, Cys-52–Cys-97, and Cys-72–Cys-111.

This sequence belongs to the plant LTP family.

Functionally, plant non-specific lipid-transfer proteins transfer phospholipids as well as galactolipids across membranes. May play a role in wax or cutin deposition in the cell walls of expanding epidermal cells and certain secretory tissues. The polypeptide is Non-specific lipid-transfer protein (Cicer arietinum (Chickpea)).